Consider the following 439-residue polypeptide: Serine/threonine-protein kinase 2 (439 aa).

Residues 87–439 enclose the Protein kinase domain; that stretch reads NDDFYHISTG…IFSDWINGRN (353 aa). ATP is bound by residues 93–101 and Lys117; that span reads ISTGGYGIV. The active-site Proton acceptor is the Asp307.

The protein belongs to the protein kinase superfamily. Ser/Thr protein kinase family. In terms of processing, phosphorylated in vivo. Autophosphorylated in vitro.

The protein localises to the host endoplasmic reticulum. It localises to the host endoplasmic reticulum-Golgi intermediate compartment. The catalysed reaction is L-seryl-[protein] + ATP = O-phospho-L-seryl-[protein] + ADP + H(+). It carries out the reaction L-threonyl-[protein] + ATP = O-phospho-L-threonyl-[protein] + ADP + H(+). Functionally, essential serine-protein kinase involved in the early stage of virion morphogenesis. In Monkeypox virus, this protein is Serine/threonine-protein kinase 2 (OPG054).